Reading from the N-terminus, the 274-residue chain is Thiamine kinase (274 aa).

The protein belongs to the thiamine kinase family.

It catalyses the reaction thiamine + ATP = thiamine phosphate + ADP + H(+). It participates in cofactor biosynthesis; thiamine diphosphate biosynthesis; thiamine phosphate from thiamine: step 1/1. In terms of biological role, catalyzes the ATP-dependent phosphorylation of thiamine to thiamine phosphate. Is involved in thiamine salvage. This Salmonella gallinarum (strain 287/91 / NCTC 13346) protein is Thiamine kinase.